Here is a 737-residue protein sequence, read N- to C-terminus: Acetylcholinesterase (737 aa).

The signal sequence occupies residues methionine 1 to valine 38. Residues histidine 141 to valine 168 are disordered. Asparagine 220 carries an N-linked (GlcNAc...) asparagine glycan. A disulfide bond links cysteine 228 and cysteine 255. Serine 360 functions as the Acyl-ester intermediate in the catalytic mechanism. A disulfide bridge links cysteine 414 with cysteine 427. Residues glutamate 486 and histidine 600 each act as charge relay system in the active site. Cysteines 562 and 683 form a disulfide. Residue asparagine 670 is glycosylated (N-linked (GlcNAc...) asparagine).

Belongs to the type-B carboxylesterase/lipase family.

The protein localises to the synapse. It catalyses the reaction acetylcholine + H2O = choline + acetate + H(+). Functionally, rapidly hydrolyzes choline released into the synapse. The chain is Acetylcholinesterase (Ace) from Anopheles gambiae (African malaria mosquito).